Reading from the N-terminus, the 201-residue chain is MLKEVRPAILVMLALTLITGLLYPLAMTVVAGTIFPAQAEGSLITRSGQVIGSALIGQEFKDDKYFHGRLSATTAADPNDSTKTVPAPYNAANSSGSNLGPTSKALADRLKEEVDKLKAENPGQPVPVDLVTTSASGLDPDISPEAALFQVPRVAKARGVPEASIRTLVAQQVKGRLLGLLGEPRVNVLALNLALDAAKLQ.

A helical transmembrane segment spans residues 9-29 (ILVMLALTLITGLLYPLAMTV). Polar residues-rich tracts occupy residues 73 to 84 (TTAADPNDSTKT) and 91 to 101 (AANSSGSNLGP). Residues 73–103 (TTAADPNDSTKTVPAPYNAANSSGSNLGPTS) form a disordered region.

The protein belongs to the KdpC family. As to quaternary structure, the system is composed of three essential subunits: KdpA, KdpB and KdpC.

The protein localises to the cell inner membrane. Part of the high-affinity ATP-driven potassium transport (or Kdp) system, which catalyzes the hydrolysis of ATP coupled with the electrogenic transport of potassium into the cytoplasm. This subunit acts as a catalytic chaperone that increases the ATP-binding affinity of the ATP-hydrolyzing subunit KdpB by the formation of a transient KdpB/KdpC/ATP ternary complex. The protein is Potassium-transporting ATPase KdpC subunit of Bradyrhizobium sp. (strain BTAi1 / ATCC BAA-1182).